A 382-amino-acid chain; its full sequence is Inactive ubiquitin-specific protease 5 (382 aa).

Residues 16 to 141 (VPAEEERALI…GGPTLPRKAI (126 aa)) enclose the DUSP domain. Residues 323 to 382 (TGLLNLGNTCFMNSAIQCLVHTPEFARYFREDYHREINWQNPLGMVVSTLSTSMALKPYV) form the USP domain.

The protein belongs to the peptidase C19 family. As to expression, widely expressed with the highest expression in floral organs.

Its subcellular location is the cell membrane. Plays an important role in the development of floral organs and chloroplasts. Does not possess deubiquitinating enzyme activity in vitro. The polypeptide is Inactive ubiquitin-specific protease 5 (Oryza sativa subsp. japonica (Rice)).